Here is a 120-residue protein sequence, read N- to C-terminus: Phosphoribosyl-AMP cyclohydrolase (120 aa).

D75 provides a ligand contact to Mg(2+). C76 is a Zn(2+) binding site. Residues D77 and D79 each contribute to the Mg(2+) site. C92 and C99 together coordinate Zn(2+).

This sequence belongs to the PRA-CH family. In terms of assembly, homodimer. It depends on Mg(2+) as a cofactor. The cofactor is Zn(2+).

The protein resides in the cytoplasm. The enzyme catalyses 1-(5-phospho-beta-D-ribosyl)-5'-AMP + H2O = 1-(5-phospho-beta-D-ribosyl)-5-[(5-phospho-beta-D-ribosylamino)methylideneamino]imidazole-4-carboxamide. It participates in amino-acid biosynthesis; L-histidine biosynthesis; L-histidine from 5-phospho-alpha-D-ribose 1-diphosphate: step 3/9. Its function is as follows. Catalyzes the hydrolysis of the adenine ring of phosphoribosyl-AMP. This Methanosarcina mazei (strain ATCC BAA-159 / DSM 3647 / Goe1 / Go1 / JCM 11833 / OCM 88) (Methanosarcina frisia) protein is Phosphoribosyl-AMP cyclohydrolase.